We begin with the raw amino-acid sequence, 380 residues long: Cytochrome b (380 aa).

4 helical membrane-spanning segments follow: residues 34–54 (FGSL…LLAM), 78–99 (WLIR…FLHI), 114–134 (WNTG…GYVL), and 179–199 (FFAL…IHLT). Heme b contacts are provided by His84 and His98. The heme b site is built by His183 and His197. An a ubiquinone-binding site is contributed by His202. A run of 4 helical transmembrane segments spans residues 227-247 (IKDI…ALFS), 289-309 (LGGV…PFLH), 321-341 (LSQT…WIGS), and 348-368 (FIII…ILFP).

Belongs to the cytochrome b family. In terms of assembly, the cytochrome bc1 complex contains 11 subunits: 3 respiratory subunits (MT-CYB, CYC1 and UQCRFS1), 2 core proteins (UQCRC1 and UQCRC2) and 6 low-molecular weight proteins (UQCRH/QCR6, UQCRB/QCR7, UQCRQ/QCR8, UQCR10/QCR9, UQCR11/QCR10 and a cleavage product of UQCRFS1). This cytochrome bc1 complex then forms a dimer. Requires heme b as cofactor.

The protein resides in the mitochondrion inner membrane. Functionally, component of the ubiquinol-cytochrome c reductase complex (complex III or cytochrome b-c1 complex) that is part of the mitochondrial respiratory chain. The b-c1 complex mediates electron transfer from ubiquinol to cytochrome c. Contributes to the generation of a proton gradient across the mitochondrial membrane that is then used for ATP synthesis. This is Cytochrome b (MT-CYB) from Alectoris rufa (Red-legged partridge).